Reading from the N-terminus, the 290-residue chain is Acetyl-coenzyme A carboxylase carboxyl transferase subunit beta (290 aa).

A CoA carboxyltransferase N-terminal domain is found at 28-290; that stretch reads IMTKCPKCKK…TGGEYEWLQD (263 aa). 4 residues coordinate Zn(2+): Cys32, Cys35, Cys51, and Cys54. The C4-type zinc-finger motif lies at 32-54; that stretch reads CPKCKKIMLTKELDKNLRVCMNC.

Belongs to the AccD/PCCB family. As to quaternary structure, acetyl-CoA carboxylase is a heterohexamer composed of biotin carboxyl carrier protein (AccB), biotin carboxylase (AccC) and two subunits each of ACCase subunit alpha (AccA) and ACCase subunit beta (AccD). Zn(2+) serves as cofactor.

It localises to the cytoplasm. The enzyme catalyses N(6)-carboxybiotinyl-L-lysyl-[protein] + acetyl-CoA = N(6)-biotinyl-L-lysyl-[protein] + malonyl-CoA. Its pathway is lipid metabolism; malonyl-CoA biosynthesis; malonyl-CoA from acetyl-CoA: step 1/1. Functionally, component of the acetyl coenzyme A carboxylase (ACC) complex. Biotin carboxylase (BC) catalyzes the carboxylation of biotin on its carrier protein (BCCP) and then the CO(2) group is transferred by the transcarboxylase to acetyl-CoA to form malonyl-CoA. The protein is Acetyl-coenzyme A carboxylase carboxyl transferase subunit beta of Bacillus velezensis (strain DSM 23117 / BGSC 10A6 / LMG 26770 / FZB42) (Bacillus amyloliquefaciens subsp. plantarum).